A 251-amino-acid polypeptide reads, in one-letter code: DNA repair protein RecO (251 aa).

It belongs to the RecO family.

Involved in DNA repair and RecF pathway recombination. The protein is DNA repair protein RecO of Lactococcus lactis subsp. cremoris (strain MG1363).